The following is a 189-amino-acid chain: Phosphoheptose isomerase (189 aa).

In terms of domain architecture, SIS spans 34–189 (LADSLAGGRK…CDLVEKRLFP (156 aa)). 49-51 (NGG) provides a ligand contact to substrate. Zn(2+) is bound by residues His-58 and Glu-62. Residues Glu-62, 91–92 (ND), 117–119 (STS), Ser-122, and Gln-169 each bind substrate. Zn(2+) is bound by residues Gln-169 and His-177.

This sequence belongs to the SIS family. GmhA subfamily. In terms of assembly, homotetramer. Requires Zn(2+) as cofactor.

It localises to the cytoplasm. The enzyme catalyses 2 D-sedoheptulose 7-phosphate = D-glycero-alpha-D-manno-heptose 7-phosphate + D-glycero-beta-D-manno-heptose 7-phosphate. It functions in the pathway carbohydrate biosynthesis; D-glycero-D-manno-heptose 7-phosphate biosynthesis; D-glycero-alpha-D-manno-heptose 7-phosphate and D-glycero-beta-D-manno-heptose 7-phosphate from sedoheptulose 7-phosphate: step 1/1. Catalyzes the isomerization of sedoheptulose 7-phosphate in D-glycero-D-manno-heptose 7-phosphate. This Geobacter sulfurreducens (strain ATCC 51573 / DSM 12127 / PCA) protein is Phosphoheptose isomerase.